A 55-amino-acid chain; its full sequence is Large ribosomal subunit protein bL33 (55 aa).

Belongs to the bacterial ribosomal protein bL33 family.

In Caulobacter sp. (strain K31), this protein is Large ribosomal subunit protein bL33.